Here is a 331-residue protein sequence, read N- to C-terminus: Tungstate uptake system ATP-binding protein TupC (331 aa).

The ABC transporter domain maps to 2–230; that stretch reads IEISNLFFNY…NQGVKFCNFI (229 aa). An ATP-binding site is contributed by 34–41; the sequence is GANGSGKS.

This sequence belongs to the ABC transporter superfamily. As to quaternary structure, the complex is composed of two ATP-binding proteins (TupC), two transmembrane proteins (TupB) and a solute-binding protein (TupA).

The catalysed reaction is tungstate(in) + ATP + H2O = tungstate(out) + ADP + phosphate + H(+). Functionally, part of an ABC transporter complex involved in ultra-high affinity tungstate uptake. Probably responsible for energy coupling to the transport system. The protein is Tungstate uptake system ATP-binding protein TupC of Campylobacter jejuni subsp. jejuni serotype O:2 (strain ATCC 700819 / NCTC 11168).